Consider the following 405-residue polypeptide: Macrolide efflux protein A (405 aa).

Transmembrane regions (helical) follow at residues 14-34, 48-68, 76-98, 145-165, 168-188, 222-242, 259-279, 285-305, 310-330, 350-370, and 373-393; these read IWAG…AIIF, MASL…GVLV, IMIG…AFYM, SLQS…YSVW, NAII…VAIV, FALL…NALF, ITEI…GLFG, ILLI…SGLL, FFIF…YSGV, LTGS…ALFA, and IGVN…AIVC.

This sequence belongs to the major facilitator superfamily. Drug:H(+) antiporter-3 (DHA3) (TC 2.A.1.21) family.

It localises to the cell membrane. Confers resistance to 14-membered macrolides including erythromycin and to 15-membered macrolides but not to 16-membered macrolides, lincosamides or analogs of streptogramin B. May function as an efflux pump to regulate intracellular macrolide levels. This Streptococcus pyogenes serotype M6 (strain ATCC BAA-946 / MGAS10394) protein is Macrolide efflux protein A.